A 281-amino-acid polypeptide reads, in one-letter code: ATP synthase gamma chain (281 aa).

It belongs to the ATPase gamma chain family. As to quaternary structure, F-type ATPases have 2 components, CF(1) - the catalytic core - and CF(0) - the membrane proton channel. CF(1) has five subunits: alpha(3), beta(3), gamma(1), delta(1), epsilon(1). CF(0) has three main subunits: a, b and c.

Its subcellular location is the cell inner membrane. Produces ATP from ADP in the presence of a proton gradient across the membrane. The gamma chain is believed to be important in regulating ATPase activity and the flow of protons through the CF(0) complex. This is ATP synthase gamma chain from Ehrlichia canis (strain Jake).